Reading from the N-terminus, the 832-residue chain is FAST kinase domain-containing protein 1, mitochondrial (832 aa).

The RAP domain maps to 765–825; it reads VAIEFLDSKA…KDAWMDYLRK (61 aa).

This sequence belongs to the FAST kinase family.

Its subcellular location is the mitochondrion. May regulate the stability of some mitochondrial mRNA species. This Xenopus laevis (African clawed frog) protein is FAST kinase domain-containing protein 1, mitochondrial (fastkd1).